Reading from the N-terminus, the 429-residue chain is 4-hydroxyphenylacetate degradation bifunctional isomerase/decarboxylase (429 aa).

2 Approximate repeats span residues 1-215 (MKGT…NQTF) and 216-429 (TWPL…ESAN). A divalent metal cation is bound by residues Glu-276, Glu-278, and Asp-307.

Belongs to the FAH family. As to quaternary structure, monomer. It depends on Mg(2+) as a cofactor.

The catalysed reaction is (2E,4Z)-5-hydroxypenta-2,4-diene-1,2,5-tricarboxylate = (3E,5R)-5-carboxy-2-oxohept-3-enedioate. It carries out the reaction (3E,5R)-5-carboxy-2-oxohept-3-enedioate + H(+) = (4Z)-2-oxohept-4-enedioate + CO2. It functions in the pathway aromatic compound metabolism; 4-hydroxyphenylacetate degradation; pyruvate and succinate semialdehyde from 4-hydroxyphenylacetate: step 4/7. Its pathway is aromatic compound metabolism; 4-hydroxyphenylacetate degradation; pyruvate and succinate semialdehyde from 4-hydroxyphenylacetate: step 5/7. Its function is as follows. Decarboxylates OPET (5-oxo-pent-3-ene-1,2,5-tricarboxylic acid) into HHDD (2-hydroxy-hept-2,4-diene-1,7-dioate) and isomerizes it to OHED (2-oxo-hept-3-ene-1,7-dioate). This chain is 4-hydroxyphenylacetate degradation bifunctional isomerase/decarboxylase (hpaG), found in Salmonella dublin.